The chain runs to 486 residues: Bile acid receptor (486 aa).

Lys132 participates in a covalent cross-link: Glycyl lysine isopeptide (Lys-Gly) (interchain with G-Cter in SUMO1). A DNA-binding region (nuclear receptor) is located at residues 134–209; it reads DELCVVCGDR…MGMLAECMYT (76 aa). Residues 137 to 157 form an NR C4-type zinc finger; it reads CVVCGDRASGYHYNALTCEGC. Phosphoserine; by PKC/PRKCA occurs at positions 145 and 164. Lys167 carries the N6-acetyllysine; by EP300 modification. Residues 173-197 form an NR C4-type zinc finger; the sequence is CKNGGNCVMDMYMRRKCQECRLRKC. Lys220 is modified (N6-methyllysine; by SETD7). Position 227 is an N6-acetyllysine; by EP300 (Lys227). Positions 262–486 constitute an NR LBD domain; that stretch reads DQQTLLHFIM…PLLCEIWDVQ (225 aa). Lys289 is covalently cross-linked (Glycyl lysine isopeptide (Lys-Gly) (interchain with G-Cter in SUMO1)). Residues Arg345, Tyr375, and Tyr383 each coordinate chenodeoxycholate. Thr456 carries the phosphothreonine; by PKC/PRKCZ modification. His461 serves as a coordination point for chenodeoxycholate.

This sequence belongs to the nuclear hormone receptor family. NR1 subfamily. As to quaternary structure, heterodimer (via C-terminus) with RXRA (via DBD); the heterodimerization enhances the binding affinity for LXXLL motifs from coactivators. Binds DNA predominantly as a heterodimer with RXRA. After activation by agonist binding interacts with coactivators. Interacts with NCOA1, NCOA2, PPARGC1A, CARM1, SETD7, PRMT1, GPS2, SMARCA4 and MED1. Interacts with EP300 and SMARCD1. Interacts with XRCC5 and XRCC6; decreasing NR1H4/FXR transactivation activity towards ABCB11/BSEP. Interacts with PAGR1 and NCOA6; indicative for an association with an MLL2/MLL3 complex (ASCOM). Post-translationally, acetylated by EP300. Lys-227 as is the major acetylation site for EP300; the dynamicly regulated acetylation inhibits heterodimerization with RXRA and transactivation activity. Deacetylated by SIRT1. Methylation may increase transactivation of target genes. In terms of processing, phosphorylation by PKC/PRKCA increases transactivation activity by promoting association with PPARGC1A. Post-translationally, sumoylated upon ligand binding. As to expression, liver and hepatocyte-related cells express mainly FXRalpha1-type isoforms with isoform 3 and isoform 4 in approximately equal proportions. In intestine and kidney mainly FXRalpha2-type isoforms are expressed with isoform 1 and isoform 2 in approximately equal proportions. Expressed in pancreatic beta cells and macrophages.

It is found in the nucleus. Ligand-activated transcription factor. Receptor for bile acids (BAs) such as chenodeoxycholic acid (CDCA), lithocholic acid, deoxycholic acid (DCA) and allocholic acid (ACA). Plays a essential role in BA homeostasis through the regulation of genes involved in BA synthesis, conjugation and enterohepatic circulation. Also regulates lipid and glucose homeostasis and is involved innate immune response. The FXR-RXR heterodimer binds predominantly to farnesoid X receptor response elements (FXREs) containing two inverted repeats of the consensus sequence 5'-AGGTCA-3' in which the monomers are spaced by 1 nucleotide (IR-1) but also to tandem repeat DR1 sites with lower affinity, and can be activated by either FXR or RXR-specific ligands. It is proposed that monomeric nuclear receptors such as NR5A2/LRH-1 bound to coregulatory nuclear responsive element (NRE) halfsites located in close proximity to FXREs modulate transcriptional activity. In the liver activates transcription of the corepressor NR0B2 thereby indirectly inhibiting CYP7A1 and CYP8B1 (involved in BA synthesis) implicating at least in part histone demethylase KDM1A resulting in epigenomic repression, and SLC10A1/NTCP (involved in hepatic uptake of conjugated BAs). Activates transcription of the repressor MAFG (involved in regulation of BA synthesis). Activates transcription of SLC27A5/BACS and BAAT (involved in BA conjugation), ABCB11/BSEP (involved in bile salt export) by directly recruiting histone methyltransferase CARM1, and ABCC2/MRP2 (involved in secretion of conjugated BAs) and ABCB4 (involved in secretion of phosphatidylcholine in the small intestine). Activates transcription of SLC27A5/BACS and BAAT (involved in BA conjugation), ABCB11/BSEP (involved in bile salt export) by directly recruiting histone methyltransferase CARM1, and ABCC2/MRP2 (involved in secretion of conjugated BAs) and ABCB4 (involved in secretion of phosphatidylcholine in the small intestine). In the intestine activates FGF19 expression and secretion leading to hepatic CYP7A1 repression. The function also involves the coordinated induction of hepatic KLB/beta-klotho expression. Regulates transcription of liver UGT2B4 and SULT2A1 involved in BA detoxification; binding to the UGT2B4 promoter seems to imply a monomeric transactivation independent of RXRA. Modulates lipid homeostasis by activating liver NR0B2/SHP-mediated repression of SREBF1 (involved in de novo lipogenesis), expression of PLTP (involved in HDL formation), SCARB1 (involved in HDL hepatic uptake), APOE, APOC1, APOC4, PPARA (involved in beta-oxidation of fatty acids), VLDLR and SDC1 (involved in the hepatic uptake of LDL and IDL remnants), and inhibiting expression of MTTP (involved in VLDL assembly. Increases expression of APOC2 (promoting lipoprotein lipase activity implicated in triglyceride clearance). Transrepresses APOA1 involving a monomeric competition with NR2A1 for binding to a DR1 element. Also reduces triglyceride clearance by inhibiting expression of ANGPTL3 and APOC3 (both involved in inhibition of lipoprotein lipase). Involved in glucose homeostasis by modulating hepatic gluconeogenesis through activation of NR0B2/SHP-mediated repression of respective genes. Modulates glycogen synthesis (inducing phosphorylation of glycogen synthase kinase-3). Modulates glucose-stimulated insulin secretion and is involved in insulin resistance. Involved in intestinal innate immunity. Plays a role in protecting the distal small intestine against bacterial overgrowth and preservation of the epithelial barrier. Down-regulates inflammatory cytokine expression in several types of immune cells including macrophages and mononuclear cells. Mediates trans-repression of TLR4-induced cytokine expression; the function seems to require its sumoylation and prevents N-CoR nuclear receptor corepressor clearance from target genes such as IL1B and NOS2. Involved in the TLR9-mediated protective mechanism in intestinal inflammation. Plays an anti-inflammatory role in liver inflammation; proposed to inhibit pro-inflammatory (but not antiapoptotic) NF-kappa-B signaling). Functionally, promotes transcriptional activation of target genes NR0B2/SHP (inducible by unconjugated CDCA), SLC51B/OSTB (inducible by unconjugated CDCA and DCA) and FABP6/IBAP; low activity for ABCB11/BSEP (inducible by unconjugated CDCA, DCA and ACA); not inducible by taurine- and glycine-amidated CDCA. Its function is as follows. Promotes transcriptional activation of target genes ABCB11/BSEP (inducible by unconjugated CDCA, DCA and ACA), NR0B2/SHP (inducible by unconjugated CDCA DCA and ACA), SLC51B/OSTB (inducible by unconjugated CDCA and DCA) and FABP6/IBAP; not inducible by taurine- and glycine-amidated CDCA. In terms of biological role, promotes transcriptional activation of target genes NR0B2/SHP (inducible by unconjugated CDCA), SLC51B/OSTB (inducible by unconjugated CDCA and DCA) and IBAP; low activity for ABCB11/BSEP (inducible by unconjugated CDCA, DCA and ACA); not inducible by taurine- and glycine-amidated CDCA. Promotes transcriptional activation of target genes ABCB11/BSEP (inducible by unconjugated CDCA, ACA and DCA), NR0B2/SHP (inducible by unconjugated CDCA, ACA and DCA), SLC51B/OSTB (inducible by unconjugated CDCA and DCA) and FABP6/IBAP; most efficient isoform compared to isoforms 1 to 3; not inducible by taurine- and glycine-amidated CDCA. This chain is Bile acid receptor (NR1H4), found in Homo sapiens (Human).